Consider the following 357-residue polypeptide: Cyclin-dependent kinase-like 1 (357 aa).

Residues 4–287 (YEKIGKIGEG…CEQLLHHPYF (284 aa)) form the Protein kinase domain. Residues 10–18 (IGEGSYGVV) and Lys33 each bind ATP. Positions 45 to 51 (KKIALRE) match the [NKR]KIAxRE motif. Catalysis depends on Asp126, which acts as the Proton acceptor.

Belongs to the protein kinase superfamily. CMGC Ser/Thr protein kinase family. CDC2/CDKX subfamily. As to expression, highly expressed in kidney, and to a lower extent in ovary.

The protein localises to the cytoplasm. Its subcellular location is the nucleus. The enzyme catalyses L-seryl-[protein] + ATP = O-phospho-L-seryl-[protein] + ADP + H(+). It carries out the reaction L-threonyl-[protein] + ATP = O-phospho-L-threonyl-[protein] + ADP + H(+). This Homo sapiens (Human) protein is Cyclin-dependent kinase-like 1.